Reading from the N-terminus, the 973-residue chain is DNA repair protein rhp26 (973 aa).

Positions 35-107 (ESREIEKKRL…DIKRRLNNED (73 aa)) form a coiled coil. The disordered stretch occupies residues 230–251 (RDQASASENNKDRGEFEGKDEW). A compositionally biased stretch (basic and acidic residues) spans 238–251 (NNKDRGEFEGKDEW). In terms of domain architecture, Helicase ATP-binding spans 289–490 (WELYCQEAGG…WNLFDFVFPG (202 aa)). 302–309 (DEMGLGKT) lines the ATP pocket. The interval 367 to 386 (SREKRQYESDASESEAEESK) is disordered. A DEAH box motif is present at residues 441 to 444 (DEGH). A Helicase C-terminal domain is found at 629-789 (VIRALLTLWK…RRFFKMTDLH (161 aa)). Disordered stretches follow at residues 803-846 (ETGS…KGKK), 863-882 (KYKP…STLG), and 930-973 (AVSS…KQRR). A compositionally biased stretch (basic residues) spans 834–846 (DRKKHKIHDKGKK). Composition is skewed to polar residues over residues 868–882 (QESN…STLG) and 947–965 (STNV…SSTL).

It localises to the cytoplasm. It is found in the nucleus. Involved in transcription-coupled repair (TCR). In Schizosaccharomyces pombe (strain 972 / ATCC 24843) (Fission yeast), this protein is DNA repair protein rhp26 (rhp26).